The sequence spans 423 residues: Polyglutamylase complex subunit TTLL1 (423 aa).

The 367-residue stretch at 1–367 (MAGRVKWVTD…NGEIPDCKWN (367 aa)) folds into the TTL domain. ATP-binding positions include K138, 144 to 145 (QG), 181 to 184 (SLYI), and 194 to 196 (KFD). Q144 is a binding site for a protein. R220 contributes to the L-glutamate binding site. Residue 241-242 (TN) coordinates ATP. Position 259 (K259) interacts with L-glutamate. Residues D313, E326, and N328 each coordinate Mg(2+). An L-glutamate-binding site is contributed by K344. The disordered stretch occupies residues 390–423 (DGAERELRSRPGQPVGPRTGRSRDSGRNVLTTWK).

The protein belongs to the tubulin polyglutamylase family. Part of the neuronal tubulin polyglutamylase complex which contains TPGS1, TPGS2, TTLL1, LRRC49 and NICN1. Interacts with PCM1, CSTPP1 and LRRC49. It depends on Mg(2+) as a cofactor.

The protein localises to the cytoplasm. It localises to the cytoskeleton. Its subcellular location is the cilium basal body. The protein resides in the cilium axoneme. It is found in the cell projection. The protein localises to the cilium. It localises to the flagellum. The enzyme catalyses (L-glutamyl)(n)-gamma-L-glutamyl-L-glutamyl-[protein] + L-glutamate + ATP = (L-glutamyl)(n+1)-gamma-L-glutamyl-L-glutamyl-[protein] + ADP + phosphate + H(+). Catalytic subunit of a polyglutamylase complex which modifies tubulin, generating side chains of glutamate on the gamma-carboxyl group of specific glutamate residues within the C-terminal tail of tubulin. Probably involved in the side-chain elongation step of the polyglutamylation reaction rather than the initiation step. Modifies both alpha- and beta-tubulins with a preference for the alpha-tail. Unlike most polyglutamylases of the tubulin--tyrosine ligase family, only displays a catalytic activity when in complex with other proteins as it is most likely lacking domains important for autonomous activity. Part of the neuronal tubulin polyglutamylase complex. Mediates cilia and flagella polyglutamylation which is essential for their biogenesis and motility. Involved in respiratory motile cilia function through the regulation of beating asymmetry. Essential for sperm flagella biogenesis, motility and male fertility. Involved in KLF4 glutamylation which impedes its ubiquitination, thereby leading to somatic cell reprogramming, pluripotency maintenance and embryogenesis. The protein is Polyglutamylase complex subunit TTLL1 (Ttll1) of Rattus norvegicus (Rat).